The primary structure comprises 100 residues: uncharacterized protein (100 aa).

The disordered stretch occupies residues 1–86 (MRGTRRGPSG…RHRPPEVTEP (86 aa)). The segment covering 35-48 (DTPPPRAPPPPPPL) has biased composition (pro residues).

This is an uncharacterized protein from Human herpesvirus 6A (strain Uganda-1102) (HHV-6 variant A).